We begin with the raw amino-acid sequence, 1753 residues long: Negative regulator of sporulation PMD1 (1753 aa).

2 Kelch repeats span residues 143–198 (NIYI…VLNE) and 206–253 (KLII…KILV). At Thr-298 the chain carries Phosphothreonine. Positions 651–664 (TTKFGNSSQSSNGS) are enriched in polar residues. 2 disordered regions span residues 651–753 (TTKF…TTCS) and 771–807 (LGLS…CTLS). Residues 670–683 (SKNGNSKSNSNTSL) show a composition bias toward low complexity. Polar residues-rich tracts occupy residues 690 to 699 (DFTSSTSSPK), 740 to 753 (TGTS…TTCS), 774 to 783 (SEQSGRSTRA), and 797 to 807 (NDGNDSNCTLS). Residue Ser-838 is modified to Phosphoserine. Disordered stretches follow at residues 875–915 (IASP…LGSS), 938–957 (PLEP…SSLA), and 962–988 (FGRD…ARRI). Residues 880–900 (QSRQTSFASTASTASVVSSTS) are compositionally biased toward low complexity. Positions 938–947 (PLEPLPPVPK) are enriched in pro residues. Residues 979–988 (KSSSSDARRI) show a composition bias toward low complexity. Phosphoserine occurs at positions 1289, 1307, and 1356. Disordered stretches follow at residues 1312–1467 (SPAT…DLDS), 1604–1686 (PIFA…NKRF), and 1706–1753 (SAVN…GKRR). Polar residues predominate over residues 1344–1379 (VSRQQNFPRRSSSFTETVPTEPTRYNYQNLDSSKSN). Residues 1399 to 1430 (NFDKYKVETLQKRNSNDGKDLDRTNDPLKNRG) show a composition bias toward basic and acidic residues. Polar residues predominate over residues 1653 to 1677 (IKFSQAPSTQISPRTSVTDFTASQQ). Position 1664 is a phosphoserine (Ser-1664). Residues 1711 to 1723 (GRKESEGHCEDRS) show a composition bias toward basic and acidic residues.

It is found in the cytoplasm. In terms of biological role, negatively regulates early sporulation-specific genes. Seems to exert its function by positively regulating the Ras/cAMP pathway. Required for growth under alkaline conditions. Acts synergetically with MDS3. The sequence is that of Negative regulator of sporulation PMD1 (PMD1) from Saccharomyces cerevisiae (strain ATCC 204508 / S288c) (Baker's yeast).